The primary structure comprises 186 residues: uncharacterized protein (186 aa).

Positions 89–164 constitute a Cupin type-2 domain; that stretch reads LMSLGIGEDI…NTPLKLYSIY (76 aa). 117 to 124 contacts ATP; the sequence is GIVKMGKS.

This is an uncharacterized protein from Bacillus subtilis (strain 168).